A 394-amino-acid chain; its full sequence is Elongation factor Tu (394 aa).

Residues 10–204 (KPHVNIGTIG…AVDSYIPQPI (195 aa)) enclose the tr-type G domain. The G1 stretch occupies residues 19–26 (GHVDHGKT). 19–26 (GHVDHGKT) is a GTP binding site. Mg(2+) is bound at residue threonine 26. The tract at residues 60 to 64 (GITIS) is G2. A G3 region spans residues 81–84 (DCPG). Residues 81 to 85 (DCPGH) and 136 to 139 (NKVD) contribute to the GTP site. The interval 136 to 139 (NKVD) is G4. The G5 stretch occupies residues 174–176 (SAL).

Belongs to the TRAFAC class translation factor GTPase superfamily. Classic translation factor GTPase family. EF-Tu/EF-1A subfamily. As to quaternary structure, monomer.

The protein localises to the cytoplasm. It catalyses the reaction GTP + H2O = GDP + phosphate + H(+). GTP hydrolase that promotes the GTP-dependent binding of aminoacyl-tRNA to the A-site of ribosomes during protein biosynthesis. This chain is Elongation factor Tu, found in Rickettsia prowazekii (strain Madrid E).